We begin with the raw amino-acid sequence, 182 residues long: MKLQLALVLCGLTLALGQIVPRSSWCPVPISPRIPRLMVPVRLIIIHHTVTAPCFNPHQCQLVLRQIRADHMRRKFRDIGYNFLIGGDGRIYEGLGFGIRGEHAPRYNSQSIGIAFIGNFQTGLPPSQMLQAARTLIQIAVQRRQVSPNYSLVGHCQTKATACPGRHLLNELKKWPRWQPKP.

Residues 1–17 (MKLQLALVLCGLTLALG) form the signal peptide. The N-acetylmuramoyl-L-alanine amidase domain occupies 40-165 (PVRLIIIHHT…CQTKATACPG (126 aa)). His47 contacts Zn(2+). Cys54 and Cys60 are disulfide-bonded. N-linked (GlcNAc...) asparagine glycosylation is present at Asn149. Residues His155 and Cys163 each contribute to the Zn(2+) site.

It belongs to the N-acetylmuramoyl-L-alanine amidase 2 family. Requires Zn(2+) as cofactor.

The protein localises to the secreted. The catalysed reaction is Hydrolyzes the link between N-acetylmuramoyl residues and L-amino acid residues in certain cell-wall glycopeptides.. Its function is as follows. N-acetylmuramyl-L-alanine amidase involved in innate immunity by degrading bacterial peptidoglycans (PGN). Probably plays a scavenger role by digesting biologically active PGN into biologically inactive fragments. Has no direct bacteriolytic activity. This is Peptidoglycan-recognition protein SB2 (PGRP-SB2) from Drosophila simulans (Fruit fly).